We begin with the raw amino-acid sequence, 37 residues long: Photosystem I reaction center subunit VIII (37 aa).

Residues 9–29 traverse the membrane as a helical segment; it reads SIFVPLVGLVFPAIAMASLFL.

This sequence belongs to the PsaI family.

Its subcellular location is the plastid. It is found in the chloroplast thylakoid membrane. In terms of biological role, may help in the organization of the PsaL subunit. In Cucumis sativus (Cucumber), this protein is Photosystem I reaction center subunit VIII.